The following is a 166-amino-acid chain: Small ribosomal subunit protein uS4 (166 aa).

Positions 102-164 constitute an S4 RNA-binding domain; the sequence is RRLQTIVWRK…HPSCLEVEKE (63 aa).

This sequence belongs to the universal ribosomal protein uS4 family. Part of the 30S ribosomal subunit. Contacts protein S5. The interaction surface between S4 and S5 is involved in control of translational fidelity.

Its function is as follows. One of the primary rRNA binding proteins, it binds directly to 16S rRNA where it nucleates assembly of the body of the 30S subunit. In terms of biological role, with S5 and S12 plays an important role in translational accuracy. This Korarchaeum cryptofilum (strain OPF8) protein is Small ribosomal subunit protein uS4.